A 538-amino-acid polypeptide reads, in one-letter code: Nicotinate phosphoribosyltransferase (538 aa).

Residues Tyr-21 and Thr-210 each contribute to the nicotinate site. The residue at position 213 (His-213) is a Phosphohistidine. Arg-318 contributes to the nicotinate binding site. Thr-380 is a 5-phospho-alpha-D-ribose 1-diphosphate binding site.

This sequence belongs to the NAPRTase family. In terms of assembly, homodimer. Mg(2+) is required as a cofactor. It depends on Mn(2+) as a cofactor. Transiently phosphorylated on a His residue during the reaction cycle. Phosphorylation strongly increases the affinity for substrates and increases the rate of nicotinate D-ribonucleotide production. Dephosphorylation regenerates the low-affinity form of the enzyme, leading to product release.

The protein resides in the cytoplasm. It is found in the cytosol. It catalyses the reaction nicotinate + 5-phospho-alpha-D-ribose 1-diphosphate + ATP + H2O = nicotinate beta-D-ribonucleotide + ADP + phosphate + diphosphate. The protein operates within cofactor biosynthesis; NAD(+) biosynthesis; nicotinate D-ribonucleotide from nicotinate: step 1/1. In terms of biological role, catalyzes the first step in the biosynthesis of NAD from nicotinic acid, the ATP-dependent synthesis of beta-nicotinate D-ribonucleotide from nicotinate and 5-phospho-D-ribose 1-phosphate. Helps prevent cellular oxidative stress via its role in NAD biosynthesis. The sequence is that of Nicotinate phosphoribosyltransferase (Naprt) from Rattus norvegicus (Rat).